The primary structure comprises 140 residues: Putative pre-16S rRNA nuclease (140 aa).

Belongs to the YqgF nuclease family.

It localises to the cytoplasm. Its function is as follows. Could be a nuclease involved in processing of the 5'-end of pre-16S rRNA. The protein is Putative pre-16S rRNA nuclease of Yersinia enterocolitica serotype O:8 / biotype 1B (strain NCTC 13174 / 8081).